The primary structure comprises 127 residues: uncharacterized protein (127 aa).

The helical transmembrane segment at 12 to 32 threads the bilayer; it reads FFFLILFYFCIISSFLFLFIF.

The protein localises to the membrane. This is an uncharacterized protein from Saccharomyces cerevisiae (strain ATCC 204508 / S288c) (Baker's yeast).